Consider the following 503-residue polypeptide: Cytochrome c lysine N-methyltransferase 1 (503 aa).

One can recognise an SET domain in the interval Ser-52–Ala-276. The SET-like stretch occupies residues Asn-190–Leu-291.

The protein belongs to the class V-like SAM-binding methyltransferase superfamily.

Its subcellular location is the cytoplasm. The protein localises to the cytosol. It carries out the reaction L-lysyl-[cytochrome c] + S-adenosyl-L-methionine = N(6)-methyl-L-lysyl-[cytochrome c] + S-adenosyl-L-homocysteine + H(+). Methyltransferase which mediates trimethylation of cytochrome c (CYC1). This is Cytochrome c lysine N-methyltransferase 1 (CTM1) from Kluyveromyces lactis (strain ATCC 8585 / CBS 2359 / DSM 70799 / NBRC 1267 / NRRL Y-1140 / WM37) (Yeast).